A 243-amino-acid polypeptide reads, in one-letter code: 2-C-methyl-D-erythritol 4-phosphate cytidylyltransferase (243 aa).

The protein belongs to the IspD/TarI cytidylyltransferase family. IspD subfamily.

The enzyme catalyses 2-C-methyl-D-erythritol 4-phosphate + CTP + H(+) = 4-CDP-2-C-methyl-D-erythritol + diphosphate. It functions in the pathway isoprenoid biosynthesis; isopentenyl diphosphate biosynthesis via DXP pathway; isopentenyl diphosphate from 1-deoxy-D-xylulose 5-phosphate: step 2/6. In terms of biological role, catalyzes the formation of 4-diphosphocytidyl-2-C-methyl-D-erythritol from CTP and 2-C-methyl-D-erythritol 4-phosphate (MEP). The polypeptide is 2-C-methyl-D-erythritol 4-phosphate cytidylyltransferase (Chlorobium phaeovibrioides (strain DSM 265 / 1930) (Prosthecochloris vibrioformis (strain DSM 265))).